Consider the following 164-residue polypeptide: Photosystem II extrinsic protein V (164 aa).

Positions Met1–Ala27 are cleaved as a signal peptide. Positions 64, 67, 68, and 119 each coordinate heme c.

The protein belongs to the cytochrome c family. PsbV subfamily. As to quaternary structure, PSII is composed of 1 copy each of membrane proteins PsbA, PsbB, PsbC, PsbD, PsbE, PsbF, PsbH, PsbI, PsbJ, PsbK, PsbL, PsbM, PsbT, PsbY, PsbZ, Psb30/Ycf12, at least 3 peripheral proteins of the oxygen-evolving complex and a large number of cofactors. It forms dimeric complexes. Heme c is required as a cofactor.

The protein localises to the plastid. It localises to the chloroplast thylakoid membrane. Functionally, one of the extrinsic, lumenal subunits of photosystem II (PSII). PSII is a light-driven water plastoquinone oxidoreductase, using light energy to abstract electrons from H(2)O, generating a proton gradient subsequently used for ATP formation. The extrinsic proteins stabilize the structure of photosystem II oxygen-evolving complex (OEC), the ion environment of oxygen evolution and protect the OEC against heat-induced inactivation. The polypeptide is Photosystem II extrinsic protein V (Emiliania huxleyi (Coccolithophore)).